The following is a 136-amino-acid chain: uncharacterized protein (136 aa).

Helical transmembrane passes span 36 to 56 (FLLT…IYLI) and 63 to 83 (FAFA…LFLS).

It is found in the cell membrane. This is an uncharacterized protein from Mycoplasma pneumoniae (strain ATCC 29342 / M129 / Subtype 1) (Mycoplasmoides pneumoniae).